The sequence spans 237 residues: Leucyl/phenylalanyl-tRNA--protein transferase (237 aa).

This sequence belongs to the L/F-transferase family.

It is found in the cytoplasm. The catalysed reaction is N-terminal L-lysyl-[protein] + L-leucyl-tRNA(Leu) = N-terminal L-leucyl-L-lysyl-[protein] + tRNA(Leu) + H(+). It carries out the reaction N-terminal L-arginyl-[protein] + L-leucyl-tRNA(Leu) = N-terminal L-leucyl-L-arginyl-[protein] + tRNA(Leu) + H(+). The enzyme catalyses L-phenylalanyl-tRNA(Phe) + an N-terminal L-alpha-aminoacyl-[protein] = an N-terminal L-phenylalanyl-L-alpha-aminoacyl-[protein] + tRNA(Phe). In terms of biological role, functions in the N-end rule pathway of protein degradation where it conjugates Leu, Phe and, less efficiently, Met from aminoacyl-tRNAs to the N-termini of proteins containing an N-terminal arginine or lysine. The protein is Leucyl/phenylalanyl-tRNA--protein transferase of Shewanella baltica (strain OS185).